We begin with the raw amino-acid sequence, 199 residues long: Chaperone protein TorD (199 aa).

The protein belongs to the TorD/DmsD family. TorD subfamily.

The protein localises to the cytoplasm. Its function is as follows. Involved in the biogenesis of TorA. Acts on TorA before the insertion of the molybdenum cofactor and, as a result, probably favors a conformation of the apoenzyme that is competent for acquiring the cofactor. The chain is Chaperone protein TorD from Escherichia coli O81 (strain ED1a).